The following is a 574-amino-acid chain: Eukaryotic translation initiation factor 3 subunit D (574 aa).

The segment at 153-178 (QRRGGNARQGQRGQGGRFGGDRPKER) is disordered. Residues 154–163 (RRGGNARQGQ) are compositionally biased toward low complexity. The interval 312 to 326 (PVETLTVSETSAEPP) is RNA gate. The interval 555–574 (EGTFDSERESSEEENSDDDQ) is disordered. The segment covering 564 to 574 (SSEEENSDDDQ) has biased composition (acidic residues).

Belongs to the eIF-3 subunit D family. Component of the eukaryotic translation initiation factor 3 (eIF-3) complex.

The protein resides in the cytoplasm. Its function is as follows. mRNA cap-binding component of the eukaryotic translation initiation factor 3 (eIF-3) complex, which is involved in protein synthesis of a specialized repertoire of mRNAs and, together with other initiation factors, stimulates binding of mRNA and methionyl-tRNAi to the 40S ribosome. The eIF-3 complex specifically targets and initiates translation of a subset of mRNAs involved in cell proliferation. In the eIF-3 complex, eif3d specifically recognizes and binds the 7-methylguanosine cap of a subset of mRNAs. The protein is Eukaryotic translation initiation factor 3 subunit D of Caenorhabditis briggsae.